The following is a 353-amino-acid chain: Photosystem II protein D1 (353 aa).

Residue threonine 2 is modified to N-acetylthreonine. Phosphothreonine is present on threonine 2. 3 helical membrane passes run 29–46 (YIGW…TATS), 118–133 (HFLL…EWEL), and 142–156 (WIAV…AATA). Histidine 118 contributes to the chlorophyll a binding site. A pheophytin a-binding site is contributed by tyrosine 126. [CaMn4O5] cluster contacts are provided by aspartate 170 and glutamate 189. The chain crosses the membrane as a helical span at residues 197-218 (FHMLGVAGVFGGSLFSAMHGSL). Histidine 198 serves as a coordination point for chlorophyll a. Residues histidine 215 and 264-265 (SF) contribute to the a quinone site. Histidine 215 provides a ligand contact to Fe cation. Residue histidine 272 participates in Fe cation binding. The chain crosses the membrane as a helical span at residues 274–288 (FLAAWPVVGIWFTAL). [CaMn4O5] cluster is bound by residues histidine 332, glutamate 333, aspartate 342, and alanine 344. Residues 345 to 353 (ALEVPSLNG) constitute a propeptide that is removed on maturation.

It belongs to the reaction center PufL/M/PsbA/D family. PSII is composed of 1 copy each of membrane proteins PsbA, PsbB, PsbC, PsbD, PsbE, PsbF, PsbH, PsbI, PsbJ, PsbK, PsbL, PsbM, PsbT, PsbX, PsbY, PsbZ, Psb30/Ycf12, at least 3 peripheral proteins of the oxygen-evolving complex and a large number of cofactors. It forms dimeric complexes. The D1/D2 heterodimer binds P680, chlorophylls that are the primary electron donor of PSII, and subsequent electron acceptors. It shares a non-heme iron and each subunit binds pheophytin, quinone, additional chlorophylls, carotenoids and lipids. D1 provides most of the ligands for the Mn4-Ca-O5 cluster of the oxygen-evolving complex (OEC). There is also a Cl(-1) ion associated with D1 and D2, which is required for oxygen evolution. The PSII complex binds additional chlorophylls, carotenoids and specific lipids. serves as cofactor. Tyr-161 forms a radical intermediate that is referred to as redox-active TyrZ, YZ or Y-Z. Post-translationally, C-terminally processed by CTPA; processing is essential to allow assembly of the oxygen-evolving complex and thus photosynthetic growth.

The protein localises to the plastid. The protein resides in the chloroplast thylakoid membrane. The catalysed reaction is 2 a plastoquinone + 4 hnu + 2 H2O = 2 a plastoquinol + O2. Its function is as follows. Photosystem II (PSII) is a light-driven water:plastoquinone oxidoreductase that uses light energy to abstract electrons from H(2)O, generating O(2) and a proton gradient subsequently used for ATP formation. It consists of a core antenna complex that captures photons, and an electron transfer chain that converts photonic excitation into a charge separation. The D1/D2 (PsbA/PsbD) reaction center heterodimer binds P680, the primary electron donor of PSII as well as several subsequent electron acceptors. This chain is Photosystem II protein D1, found in Oryza nivara (Indian wild rice).